The primary structure comprises 148 residues: Large ribosomal subunit protein uL15 (148 aa).

A compositionally biased stretch (basic and acidic residues) spans 1–12 (MSDPIKLHDLRP). Residues 1-45 (MSDPIKLHDLRPAKGANKAKTRVGRGEASKGKTAGRGTKGTKARN) are disordered.

It belongs to the universal ribosomal protein uL15 family. Part of the 50S ribosomal subunit.

Binds to the 23S rRNA. The protein is Large ribosomal subunit protein uL15 of Corynebacterium urealyticum (strain ATCC 43042 / DSM 7109).